Reading from the N-terminus, the 285-residue chain is Ribosomal RNA small subunit methyltransferase A (285 aa).

Asn11, Leu13, Gly37, Glu57, Asp85, and Asn105 together coordinate S-adenosyl-L-methionine.

Belongs to the class I-like SAM-binding methyltransferase superfamily. rRNA adenine N(6)-methyltransferase family. RsmA subfamily.

The protein resides in the cytoplasm. The enzyme catalyses adenosine(1518)/adenosine(1519) in 16S rRNA + 4 S-adenosyl-L-methionine = N(6)-dimethyladenosine(1518)/N(6)-dimethyladenosine(1519) in 16S rRNA + 4 S-adenosyl-L-homocysteine + 4 H(+). Its function is as follows. Specifically dimethylates two adjacent adenosines (A1518 and A1519) in the loop of a conserved hairpin near the 3'-end of 16S rRNA in the 30S particle. May play a critical role in biogenesis of 30S subunits. This chain is Ribosomal RNA small subunit methyltransferase A, found in Campylobacter curvus (strain 525.92).